Consider the following 123-residue polypeptide: uncharacterized protein (123 aa).

This is an uncharacterized protein from Saccharomyces cerevisiae (strain ATCC 204508 / S288c) (Baker's yeast).